The chain runs to 386 residues: Succinate--CoA ligase [ADP-forming] subunit beta (386 aa).

An ATP-grasp domain is found at 9-244 (KELLKQFGVP…LDEEDPAEIE (236 aa)). ATP contacts are provided by residues Lys-46, 53 to 55 (GRG), Glu-99, Ala-102, and Glu-107. Residues Asn-199 and Asp-213 each coordinate Mg(2+). Substrate contacts are provided by residues Asn-264 and 321-323 (GIM).

It belongs to the succinate/malate CoA ligase beta subunit family. Heterotetramer of two alpha and two beta subunits. The cofactor is Mg(2+).

It catalyses the reaction succinate + ATP + CoA = succinyl-CoA + ADP + phosphate. The enzyme catalyses GTP + succinate + CoA = succinyl-CoA + GDP + phosphate. It participates in carbohydrate metabolism; tricarboxylic acid cycle; succinate from succinyl-CoA (ligase route): step 1/1. In terms of biological role, succinyl-CoA synthetase functions in the citric acid cycle (TCA), coupling the hydrolysis of succinyl-CoA to the synthesis of either ATP or GTP and thus represents the only step of substrate-level phosphorylation in the TCA. The beta subunit provides nucleotide specificity of the enzyme and binds the substrate succinate, while the binding sites for coenzyme A and phosphate are found in the alpha subunit. In Bordetella avium (strain 197N), this protein is Succinate--CoA ligase [ADP-forming] subunit beta.